The primary structure comprises 222 residues: Probable mitochondrial import inner membrane translocase subunit Tim17 3 (222 aa).

3 helical membrane passes run 16–36 (CGCA…LKGF), 60–80 (SIAG…CALV), and 115–135 (ALVG…VATI).

The protein belongs to the Tim17/Tim22/Tim23 family. Component of the TIM23 complex at least composed of Tim23, Tim17 (Tim17a1, Tim17a2 or Tim17b1) and a Tim50. The complex interacts with the Tim44 component of the PAM complex.

The protein localises to the mitochondrion inner membrane. Essential component of the TIM23 complex, a complex that mediates the translocation of transit peptide-containing proteins across the mitochondrial inner membrane. In Drosophila melanogaster (Fruit fly), this protein is Probable mitochondrial import inner membrane translocase subunit Tim17 3 (Tim17a1).